Here is a 694-residue protein sequence, read N- to C-terminus: Type VI secretion system spike protein VgrG2 (694 aa).

It belongs to the VgrG protein family.

The protein localises to the secreted. Part of the type VI secretion system specialized secretion system, which delivers several virulence factors in both prokaryotic and eukaryotic cells during infection. Forms the spike at the tip of the elongating tube formed by haemolysin co-regulated protein Hcp. Allows the delivery of the VasX antibacterial toxin to target cells where it exerts its toxicity. The sequence is that of Type VI secretion system spike protein VgrG2 (vgrG2) from Vibrio cholerae serotype O1 (strain ATCC 39315 / El Tor Inaba N16961).